Consider the following 394-residue polypeptide: Salivary plasminogen activator gamma (394 aa).

An N-terminal signal peptide occupies residues 1–36 (MVNTMKTKLLCVLLLCGAVFSLPRQETYRQLARGSR). One can recognise a Kringle domain in the interval 45–126 (CYKDQGVTYR…TSESCSVPVC (82 aa)). Cystine bridges form between cysteine 45/cysteine 126, cysteine 66/cysteine 108, cysteine 97/cysteine 121, cysteine 131/cysteine 262, cysteine 174/cysteine 190, cysteine 182/cysteine 251, cysteine 276/cysteine 351, cysteine 308/cysteine 324, and cysteine 341/cysteine 369. Positions 143–393 (STGGLFTDIT…YLGWIRDNMR (251 aa)) constitute a Peptidase S1 domain. Residues histidine 189 and aspartate 238 each act as charge relay system in the active site. N-linked (GlcNAc...) asparagine glycosylation is present at asparagine 315. Serine 345 functions as the Charge relay system in the catalytic mechanism.

This sequence belongs to the peptidase S1 family. As to quaternary structure, monomer.

The protein localises to the secreted. The enzyme catalyses Specific cleavage of Arg-|-Val bond in plasminogen to form plasmin.. Its function is as follows. Probably essential to support the feeding habits of this exclusively haematophagous animal. Probable potent thrombolytic agent. In Desmodus rotundus (Vampire bat), this protein is Salivary plasminogen activator gamma.